The chain runs to 379 residues: Alcohol dehydrogenase 2 (379 aa).

Zn(2+)-binding residues include cysteine 47, threonine 49, histidine 69, cysteine 99, cysteine 102, cysteine 105, cysteine 113, and cysteine 177. The an alcohol site is built by threonine 49 and histidine 69. Threonine 49 is a binding site for NAD(+). NAD(+) contacts are provided by residues 202-207, aspartate 226, lysine 231, threonine 272, valine 295, 295-297, phenylalanine 322, and arginine 372; these read GLGAVG and VGV.

It belongs to the zinc-containing alcohol dehydrogenase family. As to quaternary structure, homodimer. Zn(2+) serves as cofactor.

The protein resides in the cytoplasm. It catalyses the reaction a primary alcohol + NAD(+) = an aldehyde + NADH + H(+). The catalysed reaction is a secondary alcohol + NAD(+) = a ketone + NADH + H(+). The polypeptide is Alcohol dehydrogenase 2 (ADH2) (Oryza sativa subsp. indica (Rice)).